The chain runs to 85 residues: Small ribosomal subunit protein bS16 (85 aa).

It belongs to the bacterial ribosomal protein bS16 family.

This is Small ribosomal subunit protein bS16 from Clostridium novyi (strain NT).